A 182-amino-acid polypeptide reads, in one-letter code: Fatty-acid and retinol-binding protein 1 (182 aa).

Residues Met-1 to Ser-17 form the signal peptide. Residues Glu-86–Ala-106 are a coiled coil.

This sequence belongs to the fatty-acid and retinol-binding protein (FARBP) family.

Its subcellular location is the secreted. Functionally, probably binds lipids. This Caenorhabditis elegans protein is Fatty-acid and retinol-binding protein 1 (far-1).